The chain runs to 461 residues: Serine--tRNA ligase (461 aa).

Residues 112–134 (EVPFGRDENDNREHHTFGEKPRF) form a disordered region. A compositionally biased stretch (basic and acidic residues) spans 114–134 (PFGRDENDNREHHTFGEKPRF). 252–254 (TAE) is a binding site for L-serine. An ATP-binding site is contributed by 283-285 (RAE). Glu-306 contacts L-serine. Residue 370 to 373 (EISS) participates in ATP binding. Ser-406 serves as a coordination point for L-serine.

Belongs to the class-II aminoacyl-tRNA synthetase family. Type-1 seryl-tRNA synthetase subfamily. Homodimer. The tRNA molecule binds across the dimer.

Its subcellular location is the cytoplasm. The enzyme catalyses tRNA(Ser) + L-serine + ATP = L-seryl-tRNA(Ser) + AMP + diphosphate + H(+). It catalyses the reaction tRNA(Sec) + L-serine + ATP = L-seryl-tRNA(Sec) + AMP + diphosphate + H(+). Its pathway is aminoacyl-tRNA biosynthesis; selenocysteinyl-tRNA(Sec) biosynthesis; L-seryl-tRNA(Sec) from L-serine and tRNA(Sec): step 1/1. Its function is as follows. Catalyzes the attachment of serine to tRNA(Ser). Is also able to aminoacylate tRNA(Sec) with serine, to form the misacylated tRNA L-seryl-tRNA(Sec), which will be further converted into selenocysteinyl-tRNA(Sec). This chain is Serine--tRNA ligase, found in Methylocella silvestris (strain DSM 15510 / CIP 108128 / LMG 27833 / NCIMB 13906 / BL2).